The following is a 428-amino-acid chain: Trigger factor (428 aa).

The region spanning 163–248 (GDTAIIDFEG…INDVKVKELS (86 aa)) is the PPIase FKBP-type domain.

This sequence belongs to the FKBP-type PPIase family. Tig subfamily.

The protein localises to the cytoplasm. It carries out the reaction [protein]-peptidylproline (omega=180) = [protein]-peptidylproline (omega=0). Involved in protein export. Acts as a chaperone by maintaining the newly synthesized protein in an open conformation. Functions as a peptidyl-prolyl cis-trans isomerase. The polypeptide is Trigger factor (Clostridioides difficile (strain 630) (Peptoclostridium difficile)).